A 525-amino-acid polypeptide reads, in one-letter code: Alpha-ketoglutaric semialdehyde dehydrogenase 2 (525 aa).

Residues Lys-185, Glu-188, and 242-247 (GSRQGG) contribute to the NAD(+) site. The active-site Proton acceptor is the Glu-266. Cys-303 (nucleophile) is an active-site residue. Glu-394 contributes to the NAD(+) binding site.

This sequence belongs to the aldehyde dehydrogenase family. Homodimer.

The enzyme catalyses 2,5-dioxopentanoate + NADP(+) + H2O = 2-oxoglutarate + NADPH + 2 H(+). It carries out the reaction 2,5-dioxopentanoate + NAD(+) + H2O = 2-oxoglutarate + NADH + 2 H(+). The protein operates within carbohydrate acid metabolism; D-glucarate degradation. Its pathway is carbohydrate acid metabolism; galactarate degradation. Functionally, catalyzes the NAD(P)(+)-dependent oxidation of alpha-ketoglutaric semialdehyde (alphaKGSA) to alpha-ketoglutarate. Involved in D-glucarate/D-galactarate metabolism. Prefers NAD(+) to NADP(+) as a cosubstrate. The sequence is that of Alpha-ketoglutaric semialdehyde dehydrogenase 2 from Azospirillum brasilense.